The primary structure comprises 207 residues: Guanylate kinase (207 aa).

Residues 3–181 (GQLFVICGPS…AVEMVVSIVR (179 aa)) form the Guanylate kinase-like domain. 10-17 (GPSGAGKT) contacts ATP.

This sequence belongs to the guanylate kinase family.

The protein localises to the cytoplasm. It catalyses the reaction GMP + ATP = GDP + ADP. Functionally, essential for recycling GMP and indirectly, cGMP. The sequence is that of Guanylate kinase (gmk) from Thermotoga maritima (strain ATCC 43589 / DSM 3109 / JCM 10099 / NBRC 100826 / MSB8).